The primary structure comprises 238 residues: Probable septum site-determining protein MinC (238 aa).

It belongs to the MinC family. Interacts with MinD and FtsZ.

Cell division inhibitor that blocks the formation of polar Z ring septums. Rapidly oscillates between the poles of the cell to destabilize FtsZ filaments that have formed before they mature into polar Z rings. Prevents FtsZ polymerization. This is Probable septum site-determining protein MinC from Xylella fastidiosa (strain M23).